The primary structure comprises 1330 residues: pre-mRNA 3' end processing protein WDR33 (1330 aa).

Residue Ala-2 is modified to N-acetylalanine. Ser-7 is modified (phosphoserine). N6-acetyllysine is present on Lys-46. 7 WD repeats span residues 117–156 (KVKCPVFVVRWTPEGRRLVTGASSGEFTLWNGLTFNFETI), 159–198 (AHDSPVRAMTWSHNDMWMLTADHGGYVKYWQSNMNNVKMF), 200–239 (AHKEAIREASFSPTDNKFATCSDDGTVRIWDFLRCHEERI), 242–283 (GHGA…SLAT), 286–325 (AHKNTVMEVKLNLNGNWLLTASRDHLCKLFDIRNLKEELQ), 329–369 (GHKK…EVGG), and 373–412 (AHEGMIWSLAWHPLGHILCSGSNDHTSKFWTRNRPGDKMR). Glycyl lysine isopeptide (Lys-Gly) (interchain with G-Cter in SUMO2) cross-links involve residues Lys-526, Lys-530, and Lys-560. Positions 566 to 1330 (QKQADQIQPP…GTSRGSGRGR (765 aa)) are disordered. Positions 588–607 (FSGQGPISQIPQGFQQPHPS) are enriched in polar residues. In terms of domain architecture, Collagen-like spans 617-769 (GPPGPQGQFR…GPASQGIQGP (153 aa)). The span at 622-642 (QGQFRAPGPQGQMGPQGPPMH) shows a compositional bias: low complexity. A compositionally biased stretch (pro residues) spans 682 to 694 (PHGPLGPQGPPGP). Low complexity-rich tracts occupy residues 695–706 (QGSSGPQGHMGP) and 725–750 (QGHMGPQGPPGTQGMQGPPGPRGMQG). An Omega-N-methylarginine modification is found at Arg-776. Positions 848-863 (GPSGSQGQQGPPQGSL) are enriched in low complexity. At Arg-909 the chain carries Asymmetric dimethylarginine. Low complexity predominate over residues 926 to 935 (PGLGQQGAQG). Composition is skewed to basic and acidic residues over residues 965 to 983 (SERRHEQSGGPEHGPDRGP) and 992 to 1027 (GPPDRRGSHPDFPDDFRPDDFHPDKRFGHRLREFEG). The residue at position 981 (Arg-981) is an Omega-N-methylarginine. Omega-N-methylarginine is present on Arg-1028. Basic and acidic residues-rich tracts occupy residues 1049–1061 (PDHREFNEGDGRG) and 1071–1115 (EGRR…RGRD). Acidic residues predominate over residues 1123-1133 (FGPEEGFDASD). Composition is skewed to basic and acidic residues over residues 1134-1143 (EAARGRDLRG), 1163-1211 (EFPR…RERS), and 1236-1253 (SEHREMEAQGGPSEDRGS). At Ser-1204 the chain carries Phosphoserine. Residue Arg-1256 is modified to Omega-N-methylarginine. A compositionally biased stretch (basic and acidic residues) spans 1275–1287 (DGDHHDGYHRDEP). Residues 1293–1323 (GSSSSSRGARSGSNWGRGSNMNSGPPRRGTS) are compositionally biased toward low complexity. Arg-1309 carries the post-translational modification Asymmetric dimethylarginine; alternate. Arg-1309 is modified (omega-N-methylarginine; alternate).

It belongs to the WD repeat WDR33 family. In terms of assembly, component of the cleavage and polyadenylation specificity factor (CPSF) module of the pre-mRNA 3'-end processing complex. Interacts with CPSF3/CPSF73. In terms of tissue distribution, most highly expressed in testis.

Its subcellular location is the nucleus. Essential for both cleavage and polyadenylation of pre-mRNA 3' ends. This chain is pre-mRNA 3' end processing protein WDR33 (Wdr33), found in Mus musculus (Mouse).